We begin with the raw amino-acid sequence, 191 residues long: Putative 3-methyladenine DNA glycosylase (191 aa).

This sequence belongs to the DNA glycosylase MPG family.

The sequence is that of Putative 3-methyladenine DNA glycosylase from Carboxydothermus hydrogenoformans (strain ATCC BAA-161 / DSM 6008 / Z-2901).